We begin with the raw amino-acid sequence, 192 residues long: 7-methyl-GTP pyrophosphatase (192 aa).

Asp-69 (proton acceptor) is an active-site residue.

Belongs to the Maf family. YceF subfamily. It depends on a divalent metal cation as a cofactor.

Its subcellular location is the cytoplasm. The enzyme catalyses N(7)-methyl-GTP + H2O = N(7)-methyl-GMP + diphosphate + H(+). Its function is as follows. Nucleoside triphosphate pyrophosphatase that hydrolyzes 7-methyl-GTP (m(7)GTP). May have a dual role in cell division arrest and in preventing the incorporation of modified nucleotides into cellular nucleic acids. This is 7-methyl-GTP pyrophosphatase (maf-2) from Pseudomonas putida (strain ATCC 47054 / DSM 6125 / CFBP 8728 / NCIMB 11950 / KT2440).